A 202-amino-acid polypeptide reads, in one-letter code: Adapter protein MecA 2 (202 aa).

Belongs to the MecA family. As to quaternary structure, homodimer.

In terms of biological role, enables the recognition and targeting of unfolded and aggregated proteins to the ClpC protease or to other proteins involved in proteolysis. Acts negatively in the development of competence by binding ComK and recruiting it to the ClpCP protease. When overexpressed, inhibits sporulation. Also involved in Spx degradation by ClpC. This chain is Adapter protein MecA 2 (mecA2), found in Bacillus cereus (strain ATCC 14579 / DSM 31 / CCUG 7414 / JCM 2152 / NBRC 15305 / NCIMB 9373 / NCTC 2599 / NRRL B-3711).